A 587-amino-acid chain; its full sequence is Aspartate--tRNA ligase (587 aa).

Residue Glu174 coordinates L-aspartate. The tract at residues 198–201 (QITK) is aspartate. Arg220 contributes to the L-aspartate binding site. ATP-binding positions include 220 to 222 (RDE) and Gln229. Residue His443 coordinates L-aspartate. Glu477 serves as a coordination point for ATP. Residue Arg484 coordinates L-aspartate. ATP is bound at residue 529–532 (GLDR).

The protein belongs to the class-II aminoacyl-tRNA synthetase family. Type 1 subfamily. Homodimer.

The protein resides in the cytoplasm. It catalyses the reaction tRNA(Asp) + L-aspartate + ATP = L-aspartyl-tRNA(Asp) + AMP + diphosphate. Its function is as follows. Catalyzes the attachment of L-aspartate to tRNA(Asp) in a two-step reaction: L-aspartate is first activated by ATP to form Asp-AMP and then transferred to the acceptor end of tRNA(Asp). This Streptococcus pneumoniae (strain 70585) protein is Aspartate--tRNA ligase.